The sequence spans 595 residues: Probable L-gulonolactone oxidase 1 (595 aa).

An N-terminal signal peptide occupies residues 1 to 18 (MAFWLSLIFFCFCTFASS). The 183-residue stretch at 47-229 (SICEAAKVEY…SQVTFQLQPM (183 aa)) folds into the FAD-binding PCMH-type domain.

Belongs to the oxygen-dependent FAD-linked oxidoreductase family. The cofactor is FAD.

The enzyme catalyses L-gulono-1,4-lactone + O2 = L-ascorbate + H2O2 + H(+). It participates in cofactor biosynthesis; L-ascorbate biosynthesis. Functionally, may be involved in the biosynthesis of ascorbic acid. This Arabidopsis thaliana (Mouse-ear cress) protein is Probable L-gulonolactone oxidase 1.